The sequence spans 132 residues: Small ribosomal subunit protein uS8 (132 aa).

This sequence belongs to the universal ribosomal protein uS8 family. In terms of assembly, part of the 30S ribosomal subunit. Contacts proteins S5 and S12.

In terms of biological role, one of the primary rRNA binding proteins, it binds directly to 16S rRNA central domain where it helps coordinate assembly of the platform of the 30S subunit. The protein is Small ribosomal subunit protein uS8 of Paramagnetospirillum magneticum (strain ATCC 700264 / AMB-1) (Magnetospirillum magneticum).